Consider the following 123-residue polypeptide: UPF0102 protein VSAL_I2655 (123 aa).

It belongs to the UPF0102 family.

This Aliivibrio salmonicida (strain LFI1238) (Vibrio salmonicida (strain LFI1238)) protein is UPF0102 protein VSAL_I2655.